The chain runs to 532 residues: Putative 57 kDa heat shock protein (532 aa).

SHSP domains lie at 25–134 (VNGP…CKIT) and 439–532 (SVLE…IPSN).

It belongs to the small heat shock protein (HSP20) family.

This Arabidopsis thaliana (Mouse-ear cress) protein is Putative 57 kDa heat shock protein.